Consider the following 401-residue polypeptide: L-rhamnonate dehydratase (401 aa).

2 residues coordinate substrate: H29 and R55. Residues D222, E248, and E276 each coordinate Mg(2+). H325 acts as the Proton acceptor in catalysis. E345 contacts substrate.

It belongs to the mandelate racemase/muconate lactonizing enzyme family. RhamD subfamily. In terms of assembly, homooctamer; tetramer of dimers. It depends on Mg(2+) as a cofactor.

It catalyses the reaction L-rhamnonate = 2-dehydro-3-deoxy-L-rhamnonate + H2O. Its function is as follows. Catalyzes the dehydration of L-rhamnonate to 2-keto-3-deoxy-L-rhamnonate (KDR). The sequence is that of L-rhamnonate dehydratase from Klebsiella pneumoniae subsp. pneumoniae (strain ATCC 700721 / MGH 78578).